Reading from the N-terminus, the 71-residue chain is Small ribosomal subunit protein bS21 (71 aa).

The disordered stretch occupies residues 40 to 71 (KPTQVRKRKQAAAVKRHMKRLNREQQRRQRPY). Basic residues predominate over residues 43 to 59 (QVRKRKQAAAVKRHMKR). The span at 60–71 (LNREQQRRQRPY) shows a compositional bias: basic and acidic residues.

This sequence belongs to the bacterial ribosomal protein bS21 family.

In Halorhodospira halophila (strain DSM 244 / SL1) (Ectothiorhodospira halophila (strain DSM 244 / SL1)), this protein is Small ribosomal subunit protein bS21.